A 164-amino-acid polypeptide reads, in one-letter code: Cyclin-dependent kinase inhibitor 1 (164 aa).

At serine 2 the chain carries N-acetylserine. Serine 2 participates in a covalent cross-link: Glycyl serine ester (Ser-Gly) (interchain with G-Cter in ubiquitin). A C4-type zinc finger spans residues 13–41; sequence HGSKACRRLFGPVDSEQLRRDCDALMAGC. The required for binding cyclins stretch occupies residues 17–24; it reads ACRRLFGP. The tract at residues 53-58 is required for binding CDKs; that stretch reads FVTETP. The interval 80–164 is disordered; sequence AGPRGGRDDL…RRLIFSKRKP (85 aa). Serine 114 carries the phosphoserine; by GSK3-beta modification. Serine 130 carries the post-translational modification Phosphoserine. The short motif at 140 to 164 is the PIP-box K+4 motif element; the sequence is RKRRQTSMTDFYHSKRRLIFSKRKP. Residues 141–156 carry the Nuclear localization signal motif; sequence KRRQTSMTDFYHSKRR. Threonine 145 carries the post-translational modification Phosphothreonine; by PKA, PKB/AKT1, PIM1 and PIM2. Serine 146 bears the Phosphoserine; by PKC and NUAK1 mark. Positions 152–164 are interaction with TRIM39; sequence HSKRRLIFSKRKP. Residues 153 to 164 show a composition bias toward basic residues; it reads SKRRLIFSKRKP. Serine 160 is modified (phosphoserine).

This sequence belongs to the CDI family. Interacts with HDAC1; the interaction is prevented by competitive binding of C10orf90/FATS to HDAC1 facilitating acetylation and protein stabilization of CDKN1A/p21. Interacts with MKRN1. Interacts with PSMA3. Interacts with PCNA. Component of the ternary complex, cyclin D-CDK4-CDKN1A. Interacts (via its N-terminal domain) with CDK4; the interaction promotes the assembly of the cyclin D-CDK4 complex, its nuclear translocation and promotes the cyclin D-dependent enzyme activity of CDK4. Binding to CDK2 leads to CDK2/cyclin E inactivation at the G1-S phase DNA damage checkpoint, thereby arresting cells at the G1-S transition during DNA repair. Interacts with PIM1. Interacts with STK11 and NUAK1. Interacts with DTL and TRIM39. Interacts with PKP3; the interaction sequesters CDKN1A to the cytoplasm thereby repressing its role as an inhibitor of CDK4- and CDK6-driven RB1 phosphorylation. Post-translationally, phosphorylation of Thr-145 by Akt or of Ser-146 by PKC impairs binding to PCNA. Phosphorylation at Ser-114 by GSK3-beta enhances ubiquitination by the DCX(DTL) complex. Phosphorylation of Thr-145 by PIM2 enhances protein stability and inhibits cell proliferation. Phosphorylation of Thr-145 by PIM1 results in the relocation of CDKN1A to the cytoplasm and enhanced CDKN1A protein stability. UV radiation-induced phosphorylation at Ser-146 by NUAK1 leads to its degradation. In terms of processing, ubiquitinated by MKRN1; leading to polyubiquitination and 26S proteasome-dependent degradation. Ubiquitinated by the DCX(DTL) complex, also named CRL4(CDT2) complex, leading to its degradation during S phase or following UV irradiation. Ubiquitination by the DCX(DTL) complex is essential to control replication licensing and is PCNA-dependent: interacts with PCNA via its PIP-box, while the presence of the containing the 'K+4' motif in the PIP box, recruit the DCX(DTL) complex, leading to its degradation. Ubiquitination at Ser-2 leads to degradation by the proteasome pathway. Ubiquitinated by RNF114; leading to proteasomal degradation. Acetylation leads to protein stability. Acetylated in vitro on Lys-141, Lys-154, Lys-161 and Lys-163. Deacetylation by HDAC1 is prevented by competitive binding of C10orf90/FATS to HDAC1.

The protein localises to the cytoplasm. Its subcellular location is the nucleus. Functionally, may be involved in p53/TP53 mediated inhibition of cellular proliferation in response to DNA damage. Binds to and inhibits cyclin-dependent kinase activity, preventing phosphorylation of critical cyclin-dependent kinase substrates and blocking cell cycle progression. Functions in the nuclear localization and assembly of cyclin D-CDK4 complex and promotes its kinase activity towards RB1. At higher stoichiometric ratios, inhibits the kinase activity of the cyclin D-CDK4 complex. Inhibits DNA synthesis by DNA polymerase delta by competing with POLD3 for PCNA binding. Plays an important role in controlling cell cycle progression and DNA damage-induced G2 arrest. Negatively regulates the CDK4- and CDK6-driven phosphorylation of RB1 in keratinocytes, thereby resulting in the release of E2F1 and subsequent transcription of E2F1-driven G1/S phase promoting genes. This is Cyclin-dependent kinase inhibitor 1 (CDKN1A) from Felis catus (Cat).